A 332-amino-acid chain; its full sequence is Fructose-1,6-bisphosphatase class 1 (332 aa).

4 residues coordinate Mg(2+): glutamate 89, aspartate 110, leucine 112, and aspartate 113. Substrate is bound by residues 113 to 116, asparagine 206, tyrosine 239, 257 to 259, and lysine 269; these read DGSS and YLY. Glutamate 275 is a binding site for Mg(2+).

The protein belongs to the FBPase class 1 family. As to quaternary structure, homotetramer. Mg(2+) serves as cofactor.

Its subcellular location is the cytoplasm. The catalysed reaction is beta-D-fructose 1,6-bisphosphate + H2O = beta-D-fructose 6-phosphate + phosphate. Its pathway is carbohydrate biosynthesis; gluconeogenesis. This Escherichia coli (strain ATCC 8739 / DSM 1576 / NBRC 3972 / NCIMB 8545 / WDCM 00012 / Crooks) protein is Fructose-1,6-bisphosphatase class 1.